A 235-amino-acid polypeptide reads, in one-letter code: tRNA (guanine-N(1)-)-methyltransferase (235 aa).

S-adenosyl-L-methionine is bound by residues G112 and I132–I137.

The protein belongs to the RNA methyltransferase TrmD family. Homodimer.

The protein resides in the cytoplasm. The catalysed reaction is guanosine(37) in tRNA + S-adenosyl-L-methionine = N(1)-methylguanosine(37) in tRNA + S-adenosyl-L-homocysteine + H(+). Functionally, specifically methylates guanosine-37 in various tRNAs. This Anaplasma marginale (strain St. Maries) protein is tRNA (guanine-N(1)-)-methyltransferase.